Here is a 320-residue protein sequence, read N- to C-terminus: GRAM domain-containing protein 2A (320 aa).

The interval 33 to 56 is disordered; the sequence is TEKPGKVQEPPDDGSLHWSEGSKG. Residues 74–141 form the GRAM domain; that stretch reads QQYHKLFKDI…VSVQLIKKHK (68 aa). Residues 278–298 traverse the membrane as a helical segment; that stretch reads LLKVIFVMICFLVLSSSYLAF.

Phosphorylated.

The protein localises to the endoplasmic reticulum membrane. It localises to the cell membrane. In terms of biological role, participates in the organization ofendoplasmic reticulum-plasma membrane contact sites (EPCS) with pleiotropic functions including STIM1 recruitment and calcium homeostasis. Constitutive tether that co-localize with ESYT2/3 tethers at endoplasmic reticulum-plasma membrane contact sites in a phosphatidylinositol lipid-dependent manner. Pre-marks the subset of phosphtidylinositol 4,5-biphosphate (PI(4,5)P2)-enriched EPCS destined for the store operated calcium entry pathway (SOCE). This Mus musculus (Mouse) protein is GRAM domain-containing protein 2A.